We begin with the raw amino-acid sequence, 556 residues long: Phosphoglucomutase (556 aa).

Alpha-D-glucose 1,6-bisphosphate-binding residues include Arg-22 and Ser-114. Ser-114 functions as the Phosphoserine intermediate in the catalytic mechanism. Residues Ser-114, Asp-279, Asp-281, and Asp-283 each coordinate Mg(2+). A Phosphoserine modification is found at Ser-114. 6 residues coordinate alpha-D-glucose 1,6-bisphosphate: Asp-283, Arg-284, Thr-347, Glu-366, Ser-368, and Lys-379.

The protein belongs to the phosphohexose mutase family. Monomer. It depends on Mg(2+) as a cofactor.

Its subcellular location is the cytoplasm. It catalyses the reaction alpha-D-glucose 1-phosphate = alpha-D-glucose 6-phosphate. It carries out the reaction O-phospho-L-seryl-[protein] + alpha-D-glucose 1-phosphate = alpha-D-glucose 1,6-bisphosphate + L-seryl-[protein]. The enzyme catalyses alpha-D-glucose 1,6-bisphosphate + L-seryl-[protein] = O-phospho-L-seryl-[protein] + alpha-D-glucose 6-phosphate. Catalyzes the reversible isomerization of alpha-D-glucose 1-phosphate to alpha-D-glucose 6-phosphate. The mechanism proceeds via the intermediate compound alpha-D-glucose 1,6-bisphosphate. Key enzyme in hexose metabolism. The reverse reaction is an essential step for biosynthesis because glucose 1-phosphate is the starting point for the synthesis of UDP-glucose, which acts as a precursor for the synthesis of oligosaccharides and trehalose. The sequence is that of Phosphoglucomutase (pgmB) from Emericella nidulans (strain FGSC A4 / ATCC 38163 / CBS 112.46 / NRRL 194 / M139) (Aspergillus nidulans).